The following is a 134-amino-acid chain: Terepressin/terephysin (134 aa).

The N-terminal stretch at 1–33 is a signal peptide; it reads MKCSVLPRSRLSWTMCVLLLPLLMLMLEGGVQG. The cysteines at positions 34 and 39 are disulfide-linked. Positions 44-50 are excised as a propeptide; it reads KRAVDSV. Intrachain disulfides connect Cys56/Cys100, Cys59/Cys73, Cys67/Cys90, Cys74/Cys80, Cys107/Cys121, Cys115/Cys133, and Cys122/Cys127.

The protein belongs to the vasopressin/oxytocin family. Post-translationally, contains 7 disulfide bonds. In terms of tissue distribution, expressed by the venom duct.

The protein localises to the secreted. This is Terepressin/terephysin from Terebra subulata (Chocolate spotted auger).